A 742-amino-acid chain; its full sequence is Condensin complex subunit 2 (742 aa).

Disordered stretches follow at residues 1–62 (MKRA…FNSS), 151–172 (QQTE…KKER), 452–473 (FNSS…STER), and 564–604 (IQPH…PSSS). A compositionally biased stretch (basic and acidic residues) spans 21 to 39 (ALEKKRAKENSRKQRELRR). The span at 53 to 62 (LNNSSPFNSS) shows a compositional bias: polar residues. Over residues 154–165 (EEGEDAENDDED) the composition is skewed to acidic residues. Polar residues-rich tracts occupy residues 452–470 (FNSS…SLSS) and 592–604 (PKQT…PSSS).

It belongs to the CND2 (condensin subunit 2) family. Component of the condensin complex, which contains the cut14/smc2 and cut3/smc2 heterodimer, and three non SMC subunits that probably regulate the complex: cnd1, cnd2 and cnd3.

The protein localises to the nucleus. Its subcellular location is the cytoplasm. It localises to the chromosome. Regulatory subunit of the condensin complex, a complex required for conversion of interphase chromatin into mitotic-like condense chromosomes. The condensin complex probably introduces positive supercoils into relaxed DNA in the presence of type I topoisomerases and converts nicked DNA into positive knotted forms in the presence of type II topoisomerases. The condensin complex probably also plays a role during interphase in processes such as DNA repair. The protein is Condensin complex subunit 2 (cnd2) of Schizosaccharomyces pombe (strain 972 / ATCC 24843) (Fission yeast).